Consider the following 536-residue polypeptide: Chaperonin GroEL 2 (536 aa).

ATP contacts are provided by residues 29–32, 86–90, Gly-413, 476–478, and Asp-492; these read TLGP, DGTTT, and NAA.

Belongs to the chaperonin (HSP60) family. In terms of assembly, forms a cylinder of 14 subunits composed of two heptameric rings stacked back-to-back. Interacts with the co-chaperonin GroES.

The protein resides in the cytoplasm. It catalyses the reaction ATP + H2O + a folded polypeptide = ADP + phosphate + an unfolded polypeptide.. In terms of biological role, together with its co-chaperonin GroES, plays an essential role in assisting protein folding. The GroEL-GroES system forms a nano-cage that allows encapsulation of the non-native substrate proteins and provides a physical environment optimized to promote and accelerate protein folding. This chain is Chaperonin GroEL 2, found in Moorella thermoacetica (strain ATCC 39073 / JCM 9320).